Consider the following 367-residue polypeptide: uncharacterized protein (367 aa).

A helical membrane pass occupies residues 8 to 28; sequence VLIGTFVLAAILAVFGFIYWL.

It is found in the membrane. This is an uncharacterized protein from Bradyrhizobium diazoefficiens (strain JCM 10833 / BCRC 13528 / IAM 13628 / NBRC 14792 / USDA 110).